The chain runs to 174 residues: Cytochrome c oxidase subunit 5A, mitochondrial (174 aa).

The N-terminal 29 residues, 1–29, are a transit peptide targeting the mitochondrion; it reads MASLTRAVTRLAIAGRQAVRTIATTTPVS.

The protein belongs to the cytochrome c oxidase subunit 5A family. In terms of assembly, component of the cytochrome c oxidase (complex IV, CIV), a multisubunit enzyme composed of a catalytic core of 3 subunits and several supernumerary subunits. The complex exists as a monomer or a dimer and forms supercomplexes (SCs) in the inner mitochondrial membrane with ubiquinol-cytochrome c oxidoreductase (cytochrome b-c1 complex, complex III, CIII).

The protein localises to the mitochondrion inner membrane. It participates in energy metabolism; oxidative phosphorylation. Its function is as follows. Component of the cytochrome c oxidase, the last enzyme in the mitochondrial electron transport chain which drives oxidative phosphorylation. The respiratory chain contains 3 multisubunit complexes succinate dehydrogenase (complex II, CII), ubiquinol-cytochrome c oxidoreductase (cytochrome b-c1 complex, complex III, CIII) and cytochrome c oxidase (complex IV, CIV), that cooperate to transfer electrons derived from NADH and succinate to molecular oxygen, creating an electrochemical gradient over the inner membrane that drives transmembrane transport and the ATP synthase. Cytochrome c oxidase is the component of the respiratory chain that catalyzes the reduction of oxygen to water. Electrons originating from reduced cytochrome c in the intermembrane space (IMS) are transferred via the dinuclear copper A center (CU(A)) of subunit 2 and heme A of subunit 1 to the active site in subunit 1, a binuclear center (BNC) formed by heme A3 and copper B (CU(B)). The BNC reduces molecular oxygen to 2 water molecules using 4 electrons from cytochrome c in the IMS and 4 protons from the mitochondrial matrix. In Caenorhabditis elegans, this protein is Cytochrome c oxidase subunit 5A, mitochondrial.